The chain runs to 285 residues: MKQVAIFAKVHDPRCQGVASELVTWLEERKCLPLVDTHLARHVGYARGLTEKQIRDRAELVVVLGGDGTLISVARLFSSRQVPIVGVNLGSLGFLTEITVEQLYPVLEQCLADSHRITERMMLDVTVTRGDQEISHCQVLNDAVINKGALARIIELEARVNDDFLTNFKADGLIISTPTGSTGYSLSAGGPIVQPLMKCVLITPICPHTLTNRPIVLSYQSVIRITVKSSFDEMVYLTLDGQVGVELQEGDCIEVSRAETTTALVTSPEKDYFAILRAKLKWGER.

Aspartate 67 (proton acceptor) is an active-site residue. Residues 67 to 68, 141 to 142, arginine 152, lysine 169, aspartate 171, 182 to 187, and glutamine 242 each bind NAD(+); these read DG, ND, and TGYSLS.

The protein belongs to the NAD kinase family. It depends on a divalent metal cation as a cofactor.

It is found in the cytoplasm. It carries out the reaction NAD(+) + ATP = ADP + NADP(+) + H(+). Its function is as follows. Involved in the regulation of the intracellular balance of NAD and NADP, and is a key enzyme in the biosynthesis of NADP. Catalyzes specifically the phosphorylation on 2'-hydroxyl of the adenosine moiety of NAD to yield NADP. The sequence is that of NAD kinase from Trichlorobacter lovleyi (strain ATCC BAA-1151 / DSM 17278 / SZ) (Geobacter lovleyi).